The chain runs to 58 residues: UPF0509 protein YciZ (58 aa).

The protein belongs to the UPF0509 family.

This is UPF0509 protein YciZ from Escherichia fergusonii (strain ATCC 35469 / DSM 13698 / CCUG 18766 / IAM 14443 / JCM 21226 / LMG 7866 / NBRC 102419 / NCTC 12128 / CDC 0568-73).